The primary structure comprises 334 residues: MLKIGIVGGTGYTGGELLRLLSIHPLAEVTVVTSRKQAGQPVDTVHPNLKSLTDLKFEDPDPAKIAERCDVVFTAVPHGAAMAVVPELLKYGLRVIDLSADYRLPTEKFEQVYNKKHLDPREAVYGLPELHPEVKDATLIANPGCYPTGANLACAPLIAQGLVNRAVVDSKSGISGSGQDPTEGTHYPNVTQNVRPYNLTTHRHKAEIEQEMLRLNNSTRIHFTPHVIPSTRGIMTTAHLFVDEPLTTDQVQTIYDEFYKNKPFVRLQKPSLANVRGSNFCDIAFEVEKDSDRIVVVSAIDNMVKGASGQAIQNMNLMYGFDERTGLWTSGLSP.

C145 is an active-site residue. Residues 173–192 are disordered; it reads GISGSGQDPTEGTHYPNVTQ.

It belongs to the NAGSA dehydrogenase family. Type 1 subfamily.

It localises to the cytoplasm. It carries out the reaction N-acetyl-L-glutamate 5-semialdehyde + phosphate + NADP(+) = N-acetyl-L-glutamyl 5-phosphate + NADPH + H(+). It participates in amino-acid biosynthesis; L-arginine biosynthesis; N(2)-acetyl-L-ornithine from L-glutamate: step 3/4. Its function is as follows. Catalyzes the NADPH-dependent reduction of N-acetyl-5-glutamyl phosphate to yield N-acetyl-L-glutamate 5-semialdehyde. The protein is N-acetyl-gamma-glutamyl-phosphate reductase of Methanocella arvoryzae (strain DSM 22066 / NBRC 105507 / MRE50).